The sequence spans 403 residues: NADH-quinone oxidoreductase subunit D (403 aa).

The protein belongs to the complex I 49 kDa subunit family. NDH-1 is composed of 14 different subunits. Subunits NuoB, C, D, E, F, and G constitute the peripheral sector of the complex.

The protein resides in the cell inner membrane. The catalysed reaction is a quinone + NADH + 5 H(+)(in) = a quinol + NAD(+) + 4 H(+)(out). Its function is as follows. NDH-1 shuttles electrons from NADH, via FMN and iron-sulfur (Fe-S) centers, to quinones in the respiratory chain. The immediate electron acceptor for the enzyme in this species is believed to be ubiquinone. Couples the redox reaction to proton translocation (for every two electrons transferred, four hydrogen ions are translocated across the cytoplasmic membrane), and thus conserves the redox energy in a proton gradient. The protein is NADH-quinone oxidoreductase subunit D of Pelobacter propionicus (strain DSM 2379 / NBRC 103807 / OttBd1).